A 1226-amino-acid chain; its full sequence is Chromosome partition protein Smc (1226 aa).

32 to 39 (PNGCGKSN) serves as a coordination point for ATP. Coiled coils occupy residues 173-231 (ITKF…IKRN) and 269-491 (NSLE…SKSL). The 109-residue stretch at 527-635 (YQLLGNLIQC…FDGYFIASKF (109 aa)) folds into the SMC hinge domain. 3 coiled-coil regions span residues 679 to 741 (QGVV…AAKK), 775 to 965 (MLES…LREA), and 1006 to 1078 (HRRY…KSKE).

Belongs to the SMC family. Homodimer.

Its subcellular location is the cytoplasm. Functionally, required for chromosome condensation and partitioning. This chain is Chromosome partition protein Smc, found in Halobacteriovorax marinus (strain ATCC BAA-682 / DSM 15412 / SJ) (Bacteriovorax marinus).